A 491-amino-acid polypeptide reads, in one-letter code: Probable cytosol aminopeptidase (491 aa).

Residues lysine 260 and aspartate 265 each coordinate Mn(2+). Lysine 272 is a catalytic residue. 3 residues coordinate Mn(2+): aspartate 284, aspartate 343, and glutamate 345. Residue arginine 347 is part of the active site.

The protein belongs to the peptidase M17 family. The cofactor is Mn(2+).

The protein localises to the cytoplasm. It carries out the reaction Release of an N-terminal amino acid, Xaa-|-Yaa-, in which Xaa is preferably Leu, but may be other amino acids including Pro although not Arg or Lys, and Yaa may be Pro. Amino acid amides and methyl esters are also readily hydrolyzed, but rates on arylamides are exceedingly low.. It catalyses the reaction Release of an N-terminal amino acid, preferentially leucine, but not glutamic or aspartic acids.. Its function is as follows. Presumably involved in the processing and regular turnover of intracellular proteins. Catalyzes the removal of unsubstituted N-terminal amino acids from various peptides. The protein is Probable cytosol aminopeptidase of Rippkaea orientalis (strain PCC 8801 / RF-1) (Cyanothece sp. (strain PCC 8801)).